The primary structure comprises 329 residues: Ribosomal RNA small subunit methyltransferase H (329 aa).

S-adenosyl-L-methionine contacts are provided by residues 44–46 (GGY), aspartate 62, aspartate 110, and glutamine 117. A disordered region spans residues 297–329 (APAELAANPRARSARLRSAERTSAPARRLGDAA).

It belongs to the methyltransferase superfamily. RsmH family.

It localises to the cytoplasm. It carries out the reaction cytidine(1402) in 16S rRNA + S-adenosyl-L-methionine = N(4)-methylcytidine(1402) in 16S rRNA + S-adenosyl-L-homocysteine + H(+). Specifically methylates the N4 position of cytidine in position 1402 (C1402) of 16S rRNA. The protein is Ribosomal RNA small subunit methyltransferase H of Rhodospirillum centenum (strain ATCC 51521 / SW).